The sequence spans 72 residues: Prophage late control protein OgrK (72 aa).

Cryptic version of the phage P2 OGR protein which acts as an activator of P2 late transcription. The chain is Prophage late control protein OgrK (ogrK) from Escherichia coli (strain K12).